The primary structure comprises 157 residues: Protein NrdI (157 aa).

It belongs to the NrdI family.

In terms of biological role, probably involved in ribonucleotide reductase function. The protein is Protein NrdI of Mycoplasma mycoides subsp. mycoides SC (strain CCUG 32753 / NCTC 10114 / PG1).